The primary structure comprises 518 residues: Ribonuclease Y (518 aa).

The helical transmembrane segment at 2-22 threads the bilayer; the sequence is GSIIISALLALVIGAVVGFFV. Positions 208–271 constitute a KH domain; it reads TVSVVNLPND…ETARIALDKL (64 aa). Positions 334–427 constitute an HD domain; that stretch reads VLKHSVEVAF…VAAADALSAA (94 aa).

The protein belongs to the RNase Y family.

It is found in the cell membrane. Endoribonuclease that initiates mRNA decay. In Geobacillus kaustophilus (strain HTA426), this protein is Ribonuclease Y.